Here is a 264-residue protein sequence, read N- to C-terminus: Short-chain dehydrogenase/reductase ucsE (264 aa).

A helical membrane pass occupies residues 13-32 (LVVVVGGTSGLGFAVAQAAV). L23, S43, and D74 together coordinate NADP(+). An N-linked (GlcNAc...) asparagine glycan is attached at N125. 2 residues coordinate NADP(+): R130 and K139. S157 (proton donor) is an active-site residue. Residues V202 and T204 each coordinate NADP(+).

It belongs to the short-chain dehydrogenases/reductases (SDR) family. It depends on NADP(+) as a cofactor.

Its subcellular location is the membrane. The protein operates within mycotoxin biosynthesis. Its function is as follows. Short-chain dehydrogenase/reductase; part of the gene cluster that mediates the biosynthesis of UCS1025A, a member of the pyrrolizidinone family that acts as a strong telomerase inhibitor and displays potent antibacterial and antitumor properties. These compounds share a hemiaminal-containing pyrrolizidinone core fused with a gamma-lactone, giving a furopyrrolizidine that is connected to a decalin fragment. The polyketide synthase module (PKS) of the PKS-NRPS ucsA is responsible for the synthesis of the polyketide backbone via the condensation of an acetyl-CoA starter unit with 6 malonyl-CoA units. The downstream nonribosomal peptide synthetase (NRPS) module then amidates the carboxyl end of the polyketide with a 2S,3S-methylproline derived from L-isoleucine by the 2-oxoglutarate-dependent dioxygenase ucsF which converts L-isoleucine to (4S,5S)-4-methylpyrroline-5-carboxylate that is further converted to 2S,3S-methylproline by the pyrroline-5-carboxylate reductase ucsG. Reductive release of the completed aminoacyl polyketide from the assembly line can form the 3-pyrrolin-2-one structure via an intramolecular Knoevenagel reaction. Because ucsA lacks a designated enoylreductase (ER) domain, the required activity is provided the enoyl reductase ucsL. This keto acyclic precursor is the substrate of the Diels-Alderase ucsH, that catalyzes the Diels-Alder cycloaddition. Oxidation of the 3S-methyl group to a carboxylate by the cytochrome P450 monooxygenase ucsK allows an oxa-Michael cyclization that might involve the reductase/dehydrogenase ucsI and which furnishes the furopyrrolizidine. The oxidase ucsJ likely plays a critical role in stereoselective reduction of the C5-C6 double bond to afford the required R-configured carboxylate group. Further enolization and oxidation at C5 by an unidentified enzyme affords the last intermediate that can undergo oxa-Michael cyclization to yield UCS1025A. In Acremonium sp, this protein is Short-chain dehydrogenase/reductase ucsE.